Consider the following 257-residue polypeptide: Small ribosomal subunit protein uS2 (257 aa).

This sequence belongs to the universal ribosomal protein uS2 family.

This Trichlorobacter lovleyi (strain ATCC BAA-1151 / DSM 17278 / SZ) (Geobacter lovleyi) protein is Small ribosomal subunit protein uS2.